The following is a 478-amino-acid chain: Cysteine--tRNA ligase (478 aa).

Cysteine 29 contributes to the Zn(2+) binding site. The short motif at proline 31–asparagine 41 is the 'HIGH' region element. Zn(2+) is bound by residues cysteine 216, histidine 241, and glutamate 245. A 'KMSKS' region motif is present at residues lysine 274–serine 278. Lysine 277 is an ATP binding site.

It belongs to the class-I aminoacyl-tRNA synthetase family. Monomer. Zn(2+) is required as a cofactor.

The protein localises to the cytoplasm. The enzyme catalyses tRNA(Cys) + L-cysteine + ATP = L-cysteinyl-tRNA(Cys) + AMP + diphosphate. This Orientia tsutsugamushi (strain Ikeda) (Rickettsia tsutsugamushi) protein is Cysteine--tRNA ligase.